The chain runs to 210 residues: Homeobox protein Rhox5 (210 aa).

The interval 1-119 (MEAEGSSRKV…GNPGGRQMPL (119 aa)) is disordered. Positions 17-30 (GVKEDSEEQHDVKA) are enriched in basic and acidic residues. The segment covering 47-79 (GQPGVGAVGTEGEGEELNGGKGHFGPGAPGPMG) has biased composition (gly residues). The segment at residues 117–175 (MPLQGSRFAQHRLRELESILQRTNSFDVPREDLDRLMDACVSRVQNWFKIRRAAARRTR) is a DNA-binding region (homeobox; atypical).

Its subcellular location is the nucleus. Its function is as follows. Transcription factor required for differentiation of embryonic stem cells (ESCs) into primordial germ cells. This chain is Homeobox protein Rhox5 (Rhox5), found in Mus musculus (Mouse).